The following is a 110-amino-acid chain: Large ribosomal subunit protein uL22 (110 aa).

It belongs to the universal ribosomal protein uL22 family. As to quaternary structure, part of the 50S ribosomal subunit.

Functionally, this protein binds specifically to 23S rRNA; its binding is stimulated by other ribosomal proteins, e.g. L4, L17, and L20. It is important during the early stages of 50S assembly. It makes multiple contacts with different domains of the 23S rRNA in the assembled 50S subunit and ribosome. The globular domain of the protein is located near the polypeptide exit tunnel on the outside of the subunit, while an extended beta-hairpin is found that lines the wall of the exit tunnel in the center of the 70S ribosome. The polypeptide is Large ribosomal subunit protein uL22 (Verminephrobacter eiseniae (strain EF01-2)).